The primary structure comprises 61 residues: DNTAKEKDSPANLSLRTCAAGDNAEQPLDPSRNTFDNAYYIALQRQAGVLFSDQSLFTSAR.

The disordered stretch occupies residues Asp1–Arg32. An N-linked (GlcNAc...) asparagine glycan is attached at Asn12. Ca(2+)-binding residues include Asp29, Ser31, and Asp36.

It belongs to the peroxidase family. Classical plant (class III) peroxidase subfamily. It depends on Ca(2+) as a cofactor. Requires heme b as cofactor.

Its subcellular location is the secreted. The enzyme catalyses 2 a phenolic donor + H2O2 = 2 a phenolic radical donor + 2 H2O. Functionally, removal of H(2)O(2), oxidation of toxic reductants, biosynthesis and degradation of lignin, suberization, auxin catabolism, response to environmental stresses such as wounding, pathogen attack and oxidative stress. These functions might be dependent on each isozyme/isoform in each plant tissue. The sequence is that of Peroxidase 1 from Vitis rotundifolia (Muscadine grape).